A 360-amino-acid chain; its full sequence is SPRY domain-containing SOCS box protein 3 (360 aa).

The segment at 21 to 54 (DQDGRSPALHAEEEAWGYDSDGQHSNSDSDTDLL) is disordered. The region spanning 84 to 274 (SLHPFRQIKS…MKVIRSCCCR (191 aa)) is the B30.2/SPRY domain. In terms of domain architecture, SOCS box spans 264 to 315 (SMKVIRSCCCRTSLQYLCCARLRQLLPGSVDSLEVLPLPPGLKQVLSNKLGW). Residues 322–350 (NRSSQHKGDGSATTSCGSYSDSSCTPGHD) are disordered. The span at 332–346 (SATTSCGSYSDSSCT) shows a compositional bias: polar residues.

This sequence belongs to the SPSB family. Substrate-recognition component of the ECS(SPSB3) complex, composed of spsb3, cul5, elob, elob and rnf7/rbx2.

The protein localises to the nucleus. It participates in protein modification; protein ubiquitination. In terms of biological role, substrate-recognition component of a cullin-5-RING E3 ubiquitin-protein ligase complex (ECS complex, also named CRL5 complex), which mediates the ubiquitination and subsequent proteasomal degradation of target proteins. This Xenopus laevis (African clawed frog) protein is SPRY domain-containing SOCS box protein 3 (spsb3).